The sequence spans 252 residues: Adapter protein MecA (252 aa).

The protein belongs to the MecA family. As to quaternary structure, homodimer.

Enables the recognition and targeting of unfolded and aggregated proteins to the ClpC protease or to other proteins involved in proteolysis. This Streptococcus uberis (strain ATCC BAA-854 / 0140J) protein is Adapter protein MecA.